The primary structure comprises 75 residues: DNA-directed RNA polymerase subunit omega (75 aa).

The protein belongs to the RNA polymerase subunit omega family. In terms of assembly, in cyanobacteria the RNAP catalytic core is composed of 2 alpha, 1 beta, 1 beta', 1 gamma and 1 omega subunit. When a sigma factor is associated with the core the holoenzyme is formed, which can initiate transcription.

The catalysed reaction is RNA(n) + a ribonucleoside 5'-triphosphate = RNA(n+1) + diphosphate. Functionally, promotes RNA polymerase assembly. Latches the N- and C-terminal regions of the beta' subunit thereby facilitating its interaction with the beta and alpha subunits. The sequence is that of DNA-directed RNA polymerase subunit omega from Gloeothece citriformis (strain PCC 7424) (Cyanothece sp. (strain PCC 7424)).